A 377-amino-acid polypeptide reads, in one-letter code: Erythronate-4-phosphate dehydrogenase (377 aa).

Residues serine 59 and threonine 81 each contribute to the substrate site. Aspartate 162 contributes to the NAD(+) binding site. Arginine 237 is an active-site residue. An NAD(+)-binding site is contributed by aspartate 260. Glutamate 265 is a catalytic residue. The Proton donor role is filled by histidine 282. Glycine 285 is an NAD(+) binding site. Position 286 (tyrosine 286) interacts with substrate.

It belongs to the D-isomer specific 2-hydroxyacid dehydrogenase family. PdxB subfamily. As to quaternary structure, homodimer.

Its subcellular location is the cytoplasm. It carries out the reaction 4-phospho-D-erythronate + NAD(+) = (R)-3-hydroxy-2-oxo-4-phosphooxybutanoate + NADH + H(+). It participates in cofactor biosynthesis; pyridoxine 5'-phosphate biosynthesis; pyridoxine 5'-phosphate from D-erythrose 4-phosphate: step 2/5. In terms of biological role, catalyzes the oxidation of erythronate-4-phosphate to 3-hydroxy-2-oxo-4-phosphonooxybutanoate. The protein is Erythronate-4-phosphate dehydrogenase of Psychrobacter arcticus (strain DSM 17307 / VKM B-2377 / 273-4).